The chain runs to 429 residues: MATEQRPFHLVVFGASGFTGQFVTEEVAREQVDPERSSRLPWAVAGRSREKLQRVLEKAALKLGRPTLSSEVGIIICDIANPASLDEMAKQATVVPNCVGPYRFYGEPVIKACIENGASCIDISGEPQFLELMQLKYHEKAADKGVYIIGSSGFDSIPADLGVIYTRNKMNGTLTAVESFLTIHSGPEGLSIHDGTWKSAIYGFGDQSNLRKLRNASNLKPVPLVGPKLKRRWPISYCRELKGYSIPFMGSDVSVVRRTQRYLYENLEESPVQYAAYATVGGITSVIKLMFAGLFFLFFVRFGIGRQLLIKFPWFFSFGYFSKQGPTQKQIDAASFTLTFFGQGYSQGIGTDKNKPNIKICTQVKGPEAGYVATPIAMVQAAMTLLNDASHLPKAGGVFTPGAAFSKTKLIDRLNKHGIEFSVISSSEV.

Alanine 2 is modified (N-acetylalanine). Serine 217 bears the Phosphoserine mark.

This sequence belongs to the saccharopine dehydrogenase family.

The polypeptide is Saccharopine dehydrogenase-like oxidoreductase (SCCPDH) (Pongo abelii (Sumatran orangutan)).